Consider the following 202-residue polypeptide: Holliday junction branch migration complex subunit RuvA (202 aa).

Positions 1–62 are domain I; it reads MIGYLRGRLH…EDAMELYGFT (62 aa). The interval 63–141 is domain II; it reads RPEELHLFTL…KSGLVDGTET (79 aa). A flexible linker region spans residues 141-145; that stretch reads TEAIP. The interval 146 to 202 is domain III; sequence AGGGDNDEALAALLALGYSREEIGPILARVRQELGNAAPTTAVLQAVLKTFGRGGGD.

Belongs to the RuvA family. In terms of assembly, homotetramer. Forms an RuvA(8)-RuvB(12)-Holliday junction (HJ) complex. HJ DNA is sandwiched between 2 RuvA tetramers; dsDNA enters through RuvA and exits via RuvB. An RuvB hexamer assembles on each DNA strand where it exits the tetramer. Each RuvB hexamer is contacted by two RuvA subunits (via domain III) on 2 adjacent RuvB subunits; this complex drives branch migration. In the full resolvosome a probable DNA-RuvA(4)-RuvB(12)-RuvC(2) complex forms which resolves the HJ.

The protein localises to the cytoplasm. Its function is as follows. The RuvA-RuvB-RuvC complex processes Holliday junction (HJ) DNA during genetic recombination and DNA repair, while the RuvA-RuvB complex plays an important role in the rescue of blocked DNA replication forks via replication fork reversal (RFR). RuvA specifically binds to HJ cruciform DNA, conferring on it an open structure. The RuvB hexamer acts as an ATP-dependent pump, pulling dsDNA into and through the RuvAB complex. HJ branch migration allows RuvC to scan DNA until it finds its consensus sequence, where it cleaves and resolves the cruciform DNA. In Moorella thermoacetica (strain ATCC 39073 / JCM 9320), this protein is Holliday junction branch migration complex subunit RuvA.